The following is a 272-amino-acid chain: Hemin import ATP-binding protein HmuV (272 aa).

The region spanning 2–255 is the ABC transporter domain; the sequence is LNADHLHVAR…EPIARCYGFR (254 aa). Residue 34 to 41 participates in ATP binding; that stretch reads GRNGAGKS.

This sequence belongs to the ABC transporter superfamily. Heme (hemin) importer (TC 3.A.1.14.5) family. In terms of assembly, the complex is composed of two ATP-binding proteins (HmuV), two transmembrane proteins (HmuU) and a solute-binding protein (HmuT).

Its subcellular location is the cell inner membrane. Part of the ABC transporter complex HmuTUV involved in hemin import. Responsible for energy coupling to the transport system. In Burkholderia pseudomallei (strain 1710b), this protein is Hemin import ATP-binding protein HmuV.